We begin with the raw amino-acid sequence, 111 residues long: uncharacterized protein (111 aa).

This is an uncharacterized protein from Aquifex aeolicus (strain VF5).